The following is a 567-amino-acid chain: Urease subunit alpha (567 aa).

A Urease domain is found at 129-567 (GGIDSHIHFI…LPLAQRYFLF (439 aa)). 3 residues coordinate Ni(2+): H134, H136, and K217. K217 is modified (N6-carboxylysine). Residue H219 participates in substrate binding. Ni(2+)-binding residues include H246 and H272. The Proton donor role is filled by H320. D360 serves as a coordination point for Ni(2+).

It belongs to the metallo-dependent hydrolases superfamily. Urease alpha subunit family. As to quaternary structure, heterotrimer of UreA (gamma), UreB (beta) and UreC (alpha) subunits. Three heterotrimers associate to form the active enzyme. Ni cation is required as a cofactor. Carboxylation allows a single lysine to coordinate two nickel ions.

It localises to the cytoplasm. The catalysed reaction is urea + 2 H2O + H(+) = hydrogencarbonate + 2 NH4(+). It participates in nitrogen metabolism; urea degradation; CO(2) and NH(3) from urea (urease route): step 1/1. The chain is Urease subunit alpha from Pseudomonas entomophila (strain L48).